Reading from the N-terminus, the 154-residue chain is Endoribonuclease YbeY (154 aa).

Zn(2+) contacts are provided by His-118, His-122, and His-128.

Belongs to the endoribonuclease YbeY family. The cofactor is Zn(2+).

The protein resides in the cytoplasm. Functionally, single strand-specific metallo-endoribonuclease involved in late-stage 70S ribosome quality control and in maturation of the 3' terminus of the 16S rRNA. This is Endoribonuclease YbeY from Macrococcus caseolyticus (strain JCSC5402) (Macrococcoides caseolyticum).